The primary structure comprises 229 residues: ADP-ribosylation factor-like protein 6-interacting protein 4 (229 aa).

Residues 1–20 are compositionally biased toward basic residues; the sequence is MAHVGSRKRSRSRSRSRSGR. A disordered region spans residues 1–152; sequence MAHVGSRKRS…EDNDGPVLTD (152 aa). Positions 21 to 35 are enriched in basic and acidic residues; sequence RGSEKRSKRSSKDAS. The span at 66-87 shows a compositional bias: low complexity; sequence SRSSSTSSSSSSSSSASSSSSS. A compositionally biased stretch (basic residues) spans 90–117; it reads RKKRAKHKEKKRKKKKKKRKKKLKKRVK. Phosphoserine is present on residues S140 and S174. K191 participates in a covalent cross-link: Glycyl lysine isopeptide (Lys-Gly) (interchain with G-Cter in SUMO2).

This sequence belongs to the ARL6IP4 family. Interacts with ZCCHC17. Interacts with SRSF2. Interacts with ARL6. Widely expressed. Expressed at high level in testis and thymus.

The protein resides in the nucleus. The protein localises to the nucleolus. It is found in the nucleus speckle. Involved in modulating alternative pre-mRNA splicing with either 5' distal site activation or preferential use of 3' proximal site. This chain is ADP-ribosylation factor-like protein 6-interacting protein 4 (Arl6ip4), found in Mus musculus (Mouse).